Consider the following 241-residue polypeptide: 1-(5-phosphoribosyl)-5-[(5-phosphoribosylamino)methylideneamino] imidazole-4-carboxamide isomerase (241 aa).

D10 acts as the Proton acceptor in catalysis. D129 functions as the Proton donor in the catalytic mechanism.

This sequence belongs to the HisA/HisF family.

Its subcellular location is the cytoplasm. The catalysed reaction is 1-(5-phospho-beta-D-ribosyl)-5-[(5-phospho-beta-D-ribosylamino)methylideneamino]imidazole-4-carboxamide = 5-[(5-phospho-1-deoxy-D-ribulos-1-ylimino)methylamino]-1-(5-phospho-beta-D-ribosyl)imidazole-4-carboxamide. The protein operates within amino-acid biosynthesis; L-histidine biosynthesis; L-histidine from 5-phospho-alpha-D-ribose 1-diphosphate: step 4/9. The protein is 1-(5-phosphoribosyl)-5-[(5-phosphoribosylamino)methylideneamino] imidazole-4-carboxamide isomerase of Salinispora arenicola (strain CNS-205).